The primary structure comprises 214 residues: Probable nicotinate-nucleotide adenylyltransferase (214 aa).

The protein belongs to the NadD family.

It catalyses the reaction nicotinate beta-D-ribonucleotide + ATP + H(+) = deamido-NAD(+) + diphosphate. It functions in the pathway cofactor biosynthesis; NAD(+) biosynthesis; deamido-NAD(+) from nicotinate D-ribonucleotide: step 1/1. In terms of biological role, catalyzes the reversible adenylation of nicotinate mononucleotide (NaMN) to nicotinic acid adenine dinucleotide (NaAD). In Mycolicibacterium vanbaalenii (strain DSM 7251 / JCM 13017 / BCRC 16820 / KCTC 9966 / NRRL B-24157 / PYR-1) (Mycobacterium vanbaalenii), this protein is Probable nicotinate-nucleotide adenylyltransferase.